We begin with the raw amino-acid sequence, 287 residues long: UPF0354 protein SSP1020 (287 aa).

It belongs to the UPF0354 family.

This chain is UPF0354 protein SSP1020, found in Staphylococcus saprophyticus subsp. saprophyticus (strain ATCC 15305 / DSM 20229 / NCIMB 8711 / NCTC 7292 / S-41).